The primary structure comprises 322 residues: Porphobilinogen deaminase (322 aa).

At C252 the chain carries S-(dipyrrolylmethanemethyl)cysteine.

This sequence belongs to the HMBS family. In terms of assembly, monomer. Dipyrromethane serves as cofactor.

It carries out the reaction 4 porphobilinogen + H2O = hydroxymethylbilane + 4 NH4(+). Its pathway is porphyrin-containing compound metabolism; protoporphyrin-IX biosynthesis; coproporphyrinogen-III from 5-aminolevulinate: step 2/4. Functionally, tetrapolymerization of the monopyrrole PBG into the hydroxymethylbilane pre-uroporphyrinogen in several discrete steps. This chain is Porphobilinogen deaminase, found in Caulobacter vibrioides (strain ATCC 19089 / CIP 103742 / CB 15) (Caulobacter crescentus).